The following is a 341-amino-acid chain: MKPFVPKLVYFEPEALSYPLGQELYEKFTQMGIEIRETTSHNQVRGIPGETELARYRNAKSTLVVGVRRTLKFDSSKPSAEYAIPLATGCMGHCHYCYLQTTLGSKPYIRVYVNLDDIFAQAQKYIDERAPEITRFEAACTSDIVGIDHLTHSLKKAIEFIGATDYGRLRFVTKYEHVDHLLDAKHNGKTRFRFSVNSRYVINHFEPGTSSFDARLQAARKVAGAGYKLGFVVAPIYRHDGWEQGYFELFQELARQLEGVDLSDLTFELIQHRFTKPAKRVIEQRYPKTKLDLDESKRKYKWGRYGIGKYVYRDKEARELEETMRSYIARFFPSAQVQYFT.

Positions Ser76 to Arg304 constitute a Radical SAM core domain. [4Fe-4S] cluster contacts are provided by Cys90, Cys94, and Cys97. Positions Gln217–Ala234 form a DNA-binding region, H-T-H motif.

The protein belongs to the radical SAM superfamily. SPL family. In terms of assembly, monomer or homodimer. [4Fe-4S] cluster serves as cofactor. The cofactor is S-adenosyl-L-methionine.

It catalyses the reaction (5R)-5,6-dihydro-5-(thymidin-7-yl)thymidine in DNA = a thymidine dimer in DNA. Involved in repair of UV radiation-induced DNA damage during spore germination. Can repair thymine dimer 5-thyminyl-5,6-dihydrothymine (known as spore photoproduct (SP)) by in situ monomerization of SP to two thymines. The polypeptide is Spore photoproduct lyase (splG) (Geobacillus sp. (strain Y412MC61)).